A 285-amino-acid polypeptide reads, in one-letter code: Energy-coupling factor transporter ATP-binding protein EcfA3 (285 aa).

An ABC transporter domain is found at 6–242; it reads LKVEELNYNY…KEVIRKVNLR (237 aa). Residue 39-46 participates in ATP binding; the sequence is GGNGVGKS.

Belongs to the ABC transporter superfamily. Energy-coupling factor EcfA family. As to quaternary structure, forms a stable energy-coupling factor (ECF) transporter complex composed of 2 membrane-embedded substrate-binding proteins (S component), 2 ATP-binding proteins (A component) and 2 transmembrane proteins (T component).

It localises to the cell membrane. Functionally, ATP-binding (A) component of a common energy-coupling factor (ECF) ABC-transporter complex. Unlike classic ABC transporters this ECF transporter provides the energy necessary to transport a number of different substrates. This is Energy-coupling factor transporter ATP-binding protein EcfA3 from Clostridium perfringens (strain ATCC 13124 / DSM 756 / JCM 1290 / NCIMB 6125 / NCTC 8237 / Type A).